The sequence spans 619 residues: Dihydroxy-acid dehydratase (619 aa).

Mg(2+) is bound at residue Asp81. [2Fe-2S] cluster is bound at residue Cys122. 2 residues coordinate Mg(2+): Asp123 and Lys124. N6-carboxylysine is present on Lys124. [2Fe-2S] cluster is bound at residue Cys195. Glu494 serves as a coordination point for Mg(2+). Catalysis depends on Ser520, which acts as the Proton acceptor.

It belongs to the IlvD/Edd family. As to quaternary structure, homodimer. It depends on [2Fe-2S] cluster as a cofactor. Requires Mg(2+) as cofactor.

It carries out the reaction (2R)-2,3-dihydroxy-3-methylbutanoate = 3-methyl-2-oxobutanoate + H2O. It catalyses the reaction (2R,3R)-2,3-dihydroxy-3-methylpentanoate = (S)-3-methyl-2-oxopentanoate + H2O. It participates in amino-acid biosynthesis; L-isoleucine biosynthesis; L-isoleucine from 2-oxobutanoate: step 3/4. The protein operates within amino-acid biosynthesis; L-valine biosynthesis; L-valine from pyruvate: step 3/4. Functionally, functions in the biosynthesis of branched-chain amino acids. Catalyzes the dehydration of (2R,3R)-2,3-dihydroxy-3-methylpentanoate (2,3-dihydroxy-3-methylvalerate) into 2-oxo-3-methylpentanoate (2-oxo-3-methylvalerate) and of (2R)-2,3-dihydroxy-3-methylbutanoate (2,3-dihydroxyisovalerate) into 2-oxo-3-methylbutanoate (2-oxoisovalerate), the penultimate precursor to L-isoleucine and L-valine, respectively. This is Dihydroxy-acid dehydratase from Shewanella oneidensis (strain ATCC 700550 / JCM 31522 / CIP 106686 / LMG 19005 / NCIMB 14063 / MR-1).